The following is a 182-amino-acid chain: Adenylate kinase (182 aa).

ATP is bound at residue 12–17 (GAGKGT). The tract at residues 32 to 61 (STGDLLRAEVGAKTPLGQEAAAVMNRGELV) is NMP. AMP contacts are provided by residues threonine 33, arginine 38, 59–61 (ELV), 85–88 (GFPR), and glutamine 92. The segment at 126–132 (SRGRSDD) is LID. Arginine 127 serves as a coordination point for ATP. The AMP site is built by arginine 129 and arginine 140. Glycine 168 is an ATP binding site.

Belongs to the adenylate kinase family. In terms of assembly, monomer.

Its subcellular location is the cytoplasm. It catalyses the reaction AMP + ATP = 2 ADP. Its pathway is purine metabolism; AMP biosynthesis via salvage pathway; AMP from ADP: step 1/1. Catalyzes the reversible transfer of the terminal phosphate group between ATP and AMP. Plays an important role in cellular energy homeostasis and in adenine nucleotide metabolism. The chain is Adenylate kinase from Prochlorococcus marinus (strain MIT 9303).